We begin with the raw amino-acid sequence, 816 residues long: Molybdenum cofactor sulfurase (816 aa).

Lys273 bears the N6-(pyridoxal phosphate)lysine mark. Cys427 is a catalytic residue. An MOSC domain is found at 647–812; sequence NSDSQSHSCI…IRVGEEIIPN (166 aa).

The protein belongs to the class-V pyridoxal-phosphate-dependent aminotransferase family. MOCOS subfamily. It depends on pyridoxal 5'-phosphate as a cofactor. In terms of tissue distribution, ubiquitously expressed.

The catalysed reaction is Mo-molybdopterin + L-cysteine + AH2 = thio-Mo-molybdopterin + L-alanine + A + H2O. Its pathway is cofactor biosynthesis; molybdopterin biosynthesis. In terms of biological role, sulfurates the molybdenum cofactor. Sulfation of molybdenum is essential for xanthine dehydrogenase (XDH) and aldehyde oxidase (ADO) enzymes in which molybdenum cofactor is liganded by 1 oxygen and 1 sulfur atom in active form. In Solanum lycopersicum (Tomato), this protein is Molybdenum cofactor sulfurase (FLACCA).